The primary structure comprises 289 residues: Acetyl-coenzyme A carboxylase carboxyl transferase subunit beta (289 aa).

The CoA carboxyltransferase N-terminal domain maps to valine 28 to serine 289. 4 residues coordinate Zn(2+): cysteine 32, cysteine 35, cysteine 51, and cysteine 54. A C4-type zinc finger spans residues cysteine 32–cysteine 54.

It belongs to the AccD/PCCB family. Acetyl-CoA carboxylase is a heterohexamer composed of biotin carboxyl carrier protein (AccB), biotin carboxylase (AccC) and two subunits each of ACCase subunit alpha (AccA) and ACCase subunit beta (AccD). The cofactor is Zn(2+).

The protein resides in the cytoplasm. The enzyme catalyses N(6)-carboxybiotinyl-L-lysyl-[protein] + acetyl-CoA = N(6)-biotinyl-L-lysyl-[protein] + malonyl-CoA. It participates in lipid metabolism; malonyl-CoA biosynthesis; malonyl-CoA from acetyl-CoA: step 1/1. Component of the acetyl coenzyme A carboxylase (ACC) complex. Biotin carboxylase (BC) catalyzes the carboxylation of biotin on its carrier protein (BCCP) and then the CO(2) group is transferred by the transcarboxylase to acetyl-CoA to form malonyl-CoA. This chain is Acetyl-coenzyme A carboxylase carboxyl transferase subunit beta, found in Bacillus cereus (strain AH187).